Here is a 489-residue protein sequence, read N- to C-terminus: MDTKKIRWFTVAFIAFNMVWGMGNVVNNFAQQGITVVTSWLLILALYFIPYALIVGQLCSTFKDSKGGVSSWVENTSTKRLAYYAAWTYWVVHIPYLAQKPQAILIAFGWVGQGNGNLVSQMSMTAVALISLAIFLAFLWLSTKGLNTLKVIGGLAGTAMFVMSLLFIVMAIGAPFIAKDFHIATPDMGNIKTYIPKFDFSYFTTISMLVFAVGGAEKISPYVNQTKNPAKEFPRGMFLLAGMVGICAVLGSIAMGMIFSSGNLPKDLMANGAYAAFQILGQHFGVGNFLMIVYALTNGVGQIAALAFSIDAPLRILLADADPEYVPAWLRKKTNKGTLKNGYTLTGILVSIIILLPLLGIGDMNELVKWLTNLNSVVMPMRYLWVFFAFIMLNRAVKHFQSEYKFIKQKRLAMIAGAWCFLFTLIACVLGMVPKLDYAANPSAWWFQLASNILTPIVLILLGMLLPFIARREQRKATSLDLDTIVTPD.

12 helical membrane-spanning segments follow: residues 6–26 (IRWF…GNVV), 36–56 (VVTS…LIVG), 91–111 (VVHI…FGWV), 122–142 (MSMT…LWLS), 152–172 (IGGL…VMAI), 195–215 (IPKF…AVGG), 238–258 (FLLA…MGMI), 290–310 (LMIV…AFSI), 342–362 (GYTL…LGIG), 373–393 (NLNS…FIML), 413–433 (AMIA…LGMV), and 449–469 (LASN…LPFI).

This sequence belongs to the amino acid-polyamine-organocation (APC) superfamily. Glutamate:GABA antiporter (GGA) (TC 2.A.3.7) family.

Its subcellular location is the cell membrane. Functionally, involved in aspartate and glutamate uptake. Plays no significant role in the excretion of accumulated glutamate. In Lactococcus lactis subsp. cremoris (strain MG1363), this protein is Aspartate/glutamate permease AcaP.